Consider the following 249-residue polypeptide: Diaminopimelate epimerase (249 aa).

The substrate site is built by asparagine 11 and asparagine 60. The active-site Proton donor is cysteine 69. Residues 70 to 71 (GN), asparagine 164, and 182 to 183 (ER) contribute to the substrate site. Residue cysteine 192 is the Proton acceptor of the active site. A substrate-binding site is contributed by 193 to 194 (GT).

This sequence belongs to the diaminopimelate epimerase family. Homodimer.

Its subcellular location is the cytoplasm. The catalysed reaction is (2S,6S)-2,6-diaminopimelate = meso-2,6-diaminopimelate. It functions in the pathway amino-acid biosynthesis; L-lysine biosynthesis via DAP pathway; DL-2,6-diaminopimelate from LL-2,6-diaminopimelate: step 1/1. In terms of biological role, catalyzes the stereoinversion of LL-2,6-diaminopimelate (L,L-DAP) to meso-diaminopimelate (meso-DAP), a precursor of L-lysine and an essential component of the bacterial peptidoglycan. The sequence is that of Diaminopimelate epimerase from Campylobacter jejuni subsp. jejuni serotype O:6 (strain 81116 / NCTC 11828).